The sequence spans 735 residues: Wall-associated receptor kinase 1 (735 aa).

The N-terminal stretch at 1-24 (MKVQEGLFLVAIFFSLACTQLVKG) is a signal peptide. The Extracellular segment spans residues 25–331 (QHQPGENCQN…TTTMSCKRKE (307 aa)). Residues Asn38, Asn56, Asn80, Asn90, Asn113, Asn140, Asn209, Asn235, and Asn250 are each glycosylated (N-linked (GlcNAc...) asparagine). The polygalacturonic acid-binding stretch occupies residues 67 to 254 (RPHVLSDIEV…SICGGNSTCL (188 aa)). An EGF-like 1 domain is found at 234 to 281 (GNQTCEQVGSTSICGGNSTCLDSTPRNGYICRCNEGFDGNPYLSAGCQ). 6 cysteine pairs are disulfide-bonded: Cys238/Cys253, Cys247/Cys264, Cys266/Cys280, Cys286/Cys303, Cys297/Cys312, and Cys314/Cys327. Residues 282–328 (DVNECTTSSTIHRHNCSDPKTCRNKVGGFYCKCQSGYRLDTTTMSCK) enclose the EGF-like 2; calcium-binding domain. Residue Asn296 is glycosylated (N-linked (GlcNAc...) asparagine). Residues 332–352 (FAWTTILLVTTIGFLVILLGV) traverse the membrane as a helical segment. Over 353–735 (ACIQQRMKHL…VAILDIETGR (383 aa)) the chain is Cytoplasmic. Residue Thr398 is modified to Phosphothreonine. Residues 409–692 (YAESRILGQG…RVEKTKHKWS (284 aa)) form the Protein kinase domain. ATP contacts are provided by residues 415–423 (LGQGGQGTV) and Lys437. The residue at position 482 (Tyr482) is a Phosphotyrosine. Asp534 (proton acceptor) is an active-site residue. A phosphothreonine mark is found at Thr568 and Thr573. Residue Tyr581 is modified to Phosphotyrosine.

This sequence belongs to the protein kinase superfamily. Ser/Thr protein kinase family. As to quaternary structure, interacts with the glycine-rich proteins GRP3 and GRP3S, and the type 2C protein phosphatase KAPP. Component of a 500 kDa complex, composed of WAK1, GRP3 and KAPP. Interacts with the oxygen-evolving enhancer protein 2 (OEE2). As to expression, predominantly expressed in green tissues such as stems and leaves. Detected at organ junctions.

The protein localises to the membrane. The enzyme catalyses L-seryl-[protein] + ATP = O-phospho-L-seryl-[protein] + ADP + H(+). It carries out the reaction L-threonyl-[protein] + ATP = O-phospho-L-threonyl-[protein] + ADP + H(+). Its function is as follows. Serine/threonine-protein kinase that may function as a signaling receptor of extracellular matrix component. Binding to pectin may have significance in the control of cell expansion, morphogenesis and development. Required during plant's response to pathogen infection and in plant defense against heavy metal toxicity. Phosphorylates the oxygen-evolving enhancer protein 2 (OEE2) in an GRP-3-dependent manner. The sequence is that of Wall-associated receptor kinase 1 (WAK1) from Arabidopsis thaliana (Mouse-ear cress).